The primary structure comprises 226 residues: Ribonuclease 3 (226 aa).

The RNase III domain occupies 4–127; sequence LEEFEKKLGY…VMGAIYLEKG (124 aa). Residue E40 coordinates Mg(2+). D44 is an active-site residue. Mg(2+) is bound by residues N113 and E116. E116 is an active-site residue. One can recognise a DRBM domain in the interval 154–223; sequence DFKTALQEFT…AKEALKILKA (70 aa).

It belongs to the ribonuclease III family. As to quaternary structure, homodimer. The cofactor is Mg(2+).

It is found in the cytoplasm. The catalysed reaction is Endonucleolytic cleavage to 5'-phosphomonoester.. Digests double-stranded RNA. Involved in the processing of primary rRNA transcript to yield the immediate precursors to the large and small rRNAs (23S and 16S). Processes some mRNAs, and tRNAs when they are encoded in the rRNA operon. Processes pre-crRNA and tracrRNA of type II CRISPR loci if present in the organism. This chain is Ribonuclease 3, found in Nitratiruptor sp. (strain SB155-2).